The primary structure comprises 240 residues: Transcriptional activator protein VanR (240 aa).

Residues 169 to 234 (DAKPRAVLTA…QAITKAILGG (66 aa)) enclose the HTH luxR-type domain. Residues 193–212 (AWEIATIINTSERTVKFHFS) constitute a DNA-binding region (H-T-H motif).

The protein belongs to the autoinducer-regulated transcriptional regulatory protein family.

Functionally, probable transcriptional activator. Binds to autoinducer molecule ODHL. The protein is Transcriptional activator protein VanR (vanR) of Vibrio anguillarum (Listonella anguillarum).